A 294-amino-acid chain; its full sequence is MKSFVFFAACMAIIALSSLVQAYPQKLPVPIPPPTNPPVAAFHNSVATNSKGGQDVSVKLAATNLGNKHVQPIAEVFAEGNTKGGNVLRGATVGVQGHGLGASVTKSQDGIAESFRKQAEANLRLGDSASLIGKVSQTDTKIKGIDFKPQLSSSSLALQGDRLGASISRDVNRGVSDTLTKSVSANLFRNDNHNLDASVFRSDVRQNNGFNFQKTGGMLDYSHANGHGLNAGLTRFSGIGNQATVGGYSTLFRSNDGLTSLKANAGGSQWLSGPFANQRDYSFGLGLSHNAWRG.

An N-terminal signal peptide occupies residues 1–22 (MKSFVFFAACMAIIALSSLVQA). Residues 23 to 24 (YP) constitute a propeptide, removed by a dipeptidylpeptidase. Gln25 is subject to Pyrrolidone carboxylic acid. Arg293 is subject to Arginine amide.

The protein belongs to the attacin/sarcotoxin-2 family. As to expression, synthesized by the fat body and is eventually secreted into the hemolymph.

It is found in the secreted. Sarcotoxin II is an antibacterial protein which plays a role in the inflammatory response of this insect. The main effect of sarcotoxin II on E.coli may be the inhibition of cell wall synthesis, including septum formation. The protein is Sarcotoxin-2A of Sarcophaga peregrina (Flesh fly).